The following is a 165-amino-acid chain: uncharacterized protein (165 aa).

The 86-residue stretch at 76–161 folds into the RCK C-terminal domain; sequence LEQVESALDD…LKRLIREKLT (86 aa).

This is an uncharacterized protein from Bacillus subtilis (strain 168).